The chain runs to 475 residues: Ribulose bisphosphate carboxylase large chain (475 aa).

Positions 1–2 (MS) are excised as a propeptide. Proline 3 bears the N-acetylproline mark. Lysine 14 carries the N6,N6,N6-trimethyllysine modification. Substrate contacts are provided by asparagine 123 and threonine 173. Lysine 175 functions as the Proton acceptor in the catalytic mechanism. Lysine 177 provides a ligand contact to substrate. The Mg(2+) site is built by lysine 201, aspartate 203, and glutamate 204. Lysine 201 is subject to N6-carboxylysine. Residue histidine 294 is the Proton acceptor of the active site. Residues arginine 295, histidine 327, and serine 379 each coordinate substrate.

It belongs to the RuBisCO large chain family. Type I subfamily. As to quaternary structure, heterohexadecamer of 8 large chains and 8 small chains; disulfide-linked. The disulfide link is formed within the large subunit homodimers. Requires Mg(2+) as cofactor. In terms of processing, the disulfide bond which can form in the large chain dimeric partners within the hexadecamer appears to be associated with oxidative stress and protein turnover.

It localises to the plastid. Its subcellular location is the chloroplast. The enzyme catalyses 2 (2R)-3-phosphoglycerate + 2 H(+) = D-ribulose 1,5-bisphosphate + CO2 + H2O. The catalysed reaction is D-ribulose 1,5-bisphosphate + O2 = 2-phosphoglycolate + (2R)-3-phosphoglycerate + 2 H(+). Functionally, ruBisCO catalyzes two reactions: the carboxylation of D-ribulose 1,5-bisphosphate, the primary event in carbon dioxide fixation, as well as the oxidative fragmentation of the pentose substrate in the photorespiration process. Both reactions occur simultaneously and in competition at the same active site. The chain is Ribulose bisphosphate carboxylase large chain from Picea abies (Norway spruce).